Reading from the N-terminus, the 668-residue chain is DNA ligase (668 aa).

NAD(+)-binding positions include 34–38 (DTEYD), 83–84 (SL), and glutamate 114. The active-site N6-AMP-lysine intermediate is lysine 116. NAD(+) is bound by residues arginine 137, glutamate 171, lysine 286, and lysine 310. Positions 404, 407, 422, and 427 each coordinate Zn(2+). The region spanning 588 to 668 (NSDSIIANKT…FFDLLKSEKG (81 aa)) is the BRCT domain.

It belongs to the NAD-dependent DNA ligase family. LigA subfamily. Mg(2+) is required as a cofactor. Requires Mn(2+) as cofactor.

It catalyses the reaction NAD(+) + (deoxyribonucleotide)n-3'-hydroxyl + 5'-phospho-(deoxyribonucleotide)m = (deoxyribonucleotide)n+m + AMP + beta-nicotinamide D-nucleotide.. DNA ligase that catalyzes the formation of phosphodiester linkages between 5'-phosphoryl and 3'-hydroxyl groups in double-stranded DNA using NAD as a coenzyme and as the energy source for the reaction. It is essential for DNA replication and repair of damaged DNA. The sequence is that of DNA ligase from Mycoplasma capricolum subsp. capricolum (strain California kid / ATCC 27343 / NCTC 10154).